The primary structure comprises 211 residues: MGNCGRKVLRALSFLLLLGSSSAQGTWEAMLPARLAEKSRAEEVAATGSRQPHADRCPPPPRTLPPGACQATRCQADSECPRHRRCCYNGCAYACLEAVPPPPVLDWLVQPKPRWLGGNGWLLDGPEEVLQAETCSTTEDGAEPLLCPSGYECHILQPGDEAQGIPNHGQCVKQRRQAEGRVLRQRLHKEYPEGDSKNVAEPGKGQQRHFP.

The N-terminal stretch at 1 to 23 is a signal peptide; sequence MGNCGRKVLRALSFLLLLGSSSA. One can recognise a WAP domain in the interval 50-99; sequence RQPHADRCPPPPRTLPPGACQATRCQADSECPRHRRCCYNGCAYACLEAV. 4 cysteine pairs are disulfide-bonded: C57-C87, C69-C91, C74-C86, and C80-C95. Residues 182-198 are compositionally biased toward basic and acidic residues; sequence VLRQRLHKEYPEGDSKN. The tract at residues 182–211 is disordered; the sequence is VLRQRLHKEYPEGDSKNVAEPGKGQQRHFP.

The protein resides in the secreted. Its function is as follows. Has growth inhibitory activity. This Mus musculus (Mouse) protein is WAP four-disulfide core domain protein 1 (Wfdc1).